Consider the following 187-residue polypeptide: Putative glutathione-dependent formaldehyde-activating enzyme (187 aa).

A CENP-V/GFA domain is found at 20 to 166; sequence FQGGVLKCKC…FESLGLESYD (147 aa). 7 residues coordinate Zn(2+): Cys27, Cys29, Cys48, Cys50, Cys53, Cys95, and Cys98.

Belongs to the Gfa family. The cofactor is Zn(2+).

The catalysed reaction is S-(hydroxymethyl)glutathione = glutathione + formaldehyde. Its pathway is one-carbon metabolism; formaldehyde degradation; formate from formaldehyde (glutathione route): step 1/3. Its function is as follows. Catalyzes the condensation of formaldehyde and glutathione to S-hydroxymethylglutathione. The sequence is that of Putative glutathione-dependent formaldehyde-activating enzyme from Verticillium alfalfae (strain VaMs.102 / ATCC MYA-4576 / FGSC 10136) (Verticillium wilt of alfalfa).